We begin with the raw amino-acid sequence, 184 residues long: ATP synthase subunit b 1 (184 aa).

The helical transmembrane segment at 36–55 (NILNLAILVGVLVFYGRKVV) threads the bilayer.

Belongs to the ATPase B chain family. As to quaternary structure, F-type ATPases have 2 components, F(1) - the catalytic core - and F(0) - the membrane proton channel. F(1) has five subunits: alpha(3), beta(3), gamma(1), delta(1), epsilon(1). F(0) has four main subunits: a(1), b(1), b'(1) and c(10-14). The alpha and beta chains form an alternating ring which encloses part of the gamma chain. F(1) is attached to F(0) by a central stalk formed by the gamma and epsilon chains, while a peripheral stalk is formed by the delta, b and b' chains.

The protein localises to the cellular thylakoid membrane. Its function is as follows. F(1)F(0) ATP synthase produces ATP from ADP in the presence of a proton or sodium gradient. F-type ATPases consist of two structural domains, F(1) containing the extramembraneous catalytic core and F(0) containing the membrane proton channel, linked together by a central stalk and a peripheral stalk. During catalysis, ATP synthesis in the catalytic domain of F(1) is coupled via a rotary mechanism of the central stalk subunits to proton translocation. Component of the F(0) channel, it forms part of the peripheral stalk, linking F(1) to F(0). This is ATP synthase subunit b 1 from Crocosphaera subtropica (strain ATCC 51142 / BH68) (Cyanothece sp. (strain ATCC 51142)).